A 290-amino-acid chain; its full sequence is Metallo-beta-lactamase L1 type 3 (290 aa).

Positions 1–21 (MRSTLLAFALAVALPAAHTSA) are cleaved as a signal peptide. Residues 22–33 (AEVPLPQLRAYT) constitute a propeptide that is removed on maturation. Zn(2+)-binding residues include His105, His107, Asp109, His110, and His181. Position 205 (Asp205) interacts with substrate. The cysteines at positions 239 and 267 are disulfide-linked. His246 is a binding site for Zn(2+).

It belongs to the metallo-beta-lactamase superfamily. Class-B beta-lactamase family. In terms of assembly, homotetramer. Zn(2+) serves as cofactor.

It localises to the periplasm. The enzyme catalyses a beta-lactam + H2O = a substituted beta-amino acid. Its activity is regulated as follows. Inhibited by Hg(2+) or Cu(2+), and by chelating agents such as EDTA and O-phenanthroline. Reduced enzymatic activity in presence of cobalt, nickel, cadmium, and manganese. Functionally, confers resistance to the different beta-lactams antibiotics (penicillin, cephalosporin and carbapenem) via the hydrolysis of the beta-lactam ring. The protein is Metallo-beta-lactamase L1 type 3 of Stenotrophomonas maltophilia (Pseudomonas maltophilia).